A 160-amino-acid polypeptide reads, in one-letter code: uncharacterized protein (160 aa).

Residues 1–21 (MSIQTLIIISIVIFILWLTFT) form a helical membrane-spanning segment.

Belongs to the IIV-6 203L/325L family.

It is found in the membrane. This is an uncharacterized protein from Invertebrate iridescent virus 6 (IIV-6).